Consider the following 1120-residue polypeptide: Cluster 41 polyketide synthase (1120 aa).

Positions 7 to 430 (PHDVAVVGMG…GTVSHAIIEK (424 aa)) constitute a Ketosynthase family 3 (KS3) domain. Residues Cys178, His313, and His353 each act as for beta-ketoacyl synthase activity in the active site. Residues 539–796 (VWVFSGHGAQ…TSAISAAAED (258 aa)) are malonyl-CoA:ACP transacylase (MAT) domain. Ser625 acts as the For acyl/malonyl transferase activity in catalysis. The tract at residues 804–943 (IKKILSMESR…IAMQWTSWRE (140 aa)) is ketoreductase (KR) domain. In terms of domain architecture, Carrier spans 1042–1116 (DSLSRQVREC…HIVKWLMEKT (75 aa)). Ser1076 carries the O-(pantetheine 4'-phosphoryl)serine modification.

Functionally, polyketide synthase; part of the gene cluster 41 that mediates the biosynthesis of an extracellular and diffusible metabolite that is able to stimulate colony sclerotial production. The sequence is that of Cluster 41 polyketide synthase from Aspergillus flavus (strain ATCC 200026 / FGSC A1120 / IAM 13836 / NRRL 3357 / JCM 12722 / SRRC 167).